Reading from the N-terminus, the 314-residue chain is Olfactory receptor 1C1 (314 aa).

Residues 1 to 25 lie on the Extracellular side of the membrane; that stretch reads MEKRNLTVVREFVLLGLPSSAEQQH. The helical transmembrane segment at 26 to 49 threads the bilayer; that stretch reads LLSVLFLCMYLATTLGNMLIIATI. The Cytoplasmic portion of the chain corresponds to 50-57; it reads GFDSHLHS. The chain crosses the membrane as a helical span at residues 58–79; sequence PMYFFLSNLAFVDICFTSTTVP. Residues 80 to 100 are Extracellular-facing; the sequence is QMVVNILTGTKTISFAGCLTQ. A disulfide bridge links Cys-97 with Cys-189. The helical transmembrane segment at 101 to 120 threads the bilayer; the sequence is LFFFVSFVNMDSLLLCVMAY. Residues 121–139 lie on the Cytoplasmic side of the membrane; sequence DRYVAICHPLHYTARMNLC. Residues 140 to 158 form a helical membrane-spanning segment; sequence LCVQLVAGLWLVTYLHALL. Residues 159-195 are Extracellular-facing; sequence HTVLIAQLSFCASNIIHHFFCDLNPLLQLSCSDVSFN. The helical transmembrane segment at 196–219 threads the bilayer; that stretch reads VMIIFAVGGLLALTPLVCILVSYG. At 220 to 236 the chain is on the cytoplasmic side; that stretch reads LIFSTVLKITSTQGKQR. The helical transmembrane segment at 237–259 threads the bilayer; it reads AVSTCSCHLSVVVLFYGTAIAVY. Over 260–272 the chain is Extracellular; sequence FSPSSPHMPESDT. Residues 273 to 292 form a helical membrane-spanning segment; sequence LSTIMYSMVAPMLNPFIYTL. Over 293 to 314 the chain is Cytoplasmic; the sequence is RNRDMKRGLQKMLLKCTVFQQQ.

This sequence belongs to the G-protein coupled receptor 1 family.

The protein localises to the cell membrane. Functionally, odorant receptor. The chain is Olfactory receptor 1C1 (OR1C1) from Homo sapiens (Human).